Here is a 155-residue protein sequence, read N- to C-terminus: Endoribonuclease YbeY (155 aa).

H114, H118, and H124 together coordinate Zn(2+).

This sequence belongs to the endoribonuclease YbeY family. It depends on Zn(2+) as a cofactor.

The protein localises to the cytoplasm. Functionally, single strand-specific metallo-endoribonuclease involved in late-stage 70S ribosome quality control and in maturation of the 3' terminus of the 16S rRNA. The sequence is that of Endoribonuclease YbeY from Proteus mirabilis (strain HI4320).